The sequence spans 351 residues: Putative glycosyltransferase 45 (351 aa).

Belongs to the glycosyltransferase group 1 family.

This Sulfolobus islandicus filamentous virus (isolate Iceland/Hveragerdi) (SIFV) protein is Putative glycosyltransferase 45 (SIFV0045).